The chain runs to 310 residues: UPF0761 membrane protein VF_0100 (310 aa).

6 consecutive transmembrane segments (helical) span residues 34–54 (YMAYITLLSLVPLITVLLSVL), 97–117 (MTAVGSGFLFVASVMLISSID), 136–156 (FSLYWMILTLGPLLVGASLAA), 178–198 (LLGWLPIILSFSAFVGLYLLV), 207–227 (HALIGAMSAGCLFEFSKVGFA), and 242–262 (ALAAVPILFVWVYLCWIIVLI).

The protein belongs to the UPF0761 family.

Its subcellular location is the cell inner membrane. The chain is UPF0761 membrane protein VF_0100 from Aliivibrio fischeri (strain ATCC 700601 / ES114) (Vibrio fischeri).